A 306-amino-acid chain; its full sequence is Methionyl-tRNA formyltransferase (306 aa).

A (6S)-5,6,7,8-tetrahydrofolate-binding site is contributed by 109–112; the sequence is SILP.

It belongs to the Fmt family.

It catalyses the reaction L-methionyl-tRNA(fMet) + (6R)-10-formyltetrahydrofolate = N-formyl-L-methionyl-tRNA(fMet) + (6S)-5,6,7,8-tetrahydrofolate + H(+). In terms of biological role, attaches a formyl group to the free amino group of methionyl-tRNA(fMet). The formyl group appears to play a dual role in the initiator identity of N-formylmethionyl-tRNA by promoting its recognition by IF2 and preventing the misappropriation of this tRNA by the elongation apparatus. The chain is Methionyl-tRNA formyltransferase from Herpetosiphon aurantiacus (strain ATCC 23779 / DSM 785 / 114-95).